The chain runs to 315 residues: MPALSCRFYQHKFPEVEDVVMVNVRSIAEMGAYVSLLEYNNIEGMILLSELSRRRIRSINKLIRIGRNECVVVIRVDKEKGYIDLSKRRVSPEEAIKCEDKFTKSKTVYSILRHVAEVLEYTKDEQLESLFQRTAWVFDDKYKRPGYGAYDAFKHAVSDPAILDSLDLTEEERRVLIDNINRRLTPQAVKIRADIEVACYGYEGIDAVKEALRAGLNCSTENMPIKINLIAPPRYVMTTTTLERTEGLSVLNQAMAVIKEKIEEKRGVFNVQMEPKVVTDTDETELARQLERLERENAEVDGDDDAEEMEAKTED.

The S1 motif domain occupies 17-88 (EDVVMVNVRS…EKGYIDLSKR (72 aa)). Ser49 and Ser52 each carry phosphoserine. The tract at residues 292 to 315 (RLERENAEVDGDDDAEEMEAKTED) is disordered. Residues 299–308 (EVDGDDDAEE) are compositionally biased toward acidic residues.

This sequence belongs to the eIF-2-alpha family. Eukaryotic translation initiation factor 2 eIF2 is a heterotrimeric complex composed of an alpha (EIF2S1), a beta (EIF2S2) and a gamma (EIF2S3) chain. Phosphorylation at Ser-49 and Ser-52 stabilizes the eIF-2/GDP/eIF2B complex and prevents GDP/GTP exchange reaction, thus impairing the recycling of eIF-2 between successive rounds of initiation and leading to global inhibition of translation, while concomitantly initiating the preferential translation of integrated stress response (ISR)-specific mRNAs.

It localises to the cytoplasm. The protein resides in the stress granule. Its subcellular location is the cytosol. With respect to regulation, activity is regulated by phosphorylation at Ser-49 and Ser-52, which stabilizes the eIF2/GDP/eIF2B complex and prevents the eIF2B-mediated exchange of GDP for GTP, thereby preventing the formation of the 43S pre-initiation complex (43S PIC). This results in the global attenuation of 5' cap-dependent protein synthesis and concomitant translation of ISR-specific mRNAs that contain a short upstream open reading frame (uORF) in their 5' UTR. Its function is as follows. Member of the eIF2 complex that functions in the early steps of protein synthesis by forming a ternary complex with GTP and initiator tRNA. This complex binds to a 40S ribosomal subunit, followed by mRNA binding to form a 43S pre-initiation complex. Junction of the 60S ribosomal subunit to form the 80S initiation complex is preceded by hydrolysis of the GTP bound to eIF2 and release of an eIF2-GDP binary complex. In order for eIF2 to recycle and catalyze another round of initiation, the GDP bound to eIF2 must exchange with GTP by way of a reaction catalyzed by eIF2B. EIF2S1/eIF2-alpha is a key component of the integrated stress response (ISR), required for adaptation to various stress: phosphorylation by metabolic-stress sensing protein kinases (EIF2AK1/HRI, EIF2AK2/PKR, EIF2AK3/PERK and EIF2AK4/GCN2) in response to stress converts EIF2S1/eIF2-alpha in a global protein synthesis inhibitor, leading to a attenuation of cap-dependent translation, while concomitantly initiating the preferential translation of ISR-specific mRNAs, such as the transcriptional activators ATF4 and QRICH1. The protein is Eukaryotic translation initiation factor 2 subunit 1 (EIF2S1) of Gallus gallus (Chicken).